Reading from the N-terminus, the 206-residue chain is LexA repressor (206 aa).

The H-T-H motif DNA-binding region spans 28–48; sequence VREIGEAVGLASSSTVHGHLA. Residues Ser128 and Lys166 each act as for autocatalytic cleavage activity in the active site.

It belongs to the peptidase S24 family. As to quaternary structure, homodimer.

It catalyses the reaction Hydrolysis of Ala-|-Gly bond in repressor LexA.. Represses a number of genes involved in the response to DNA damage (SOS response), including recA and lexA. In the presence of single-stranded DNA, RecA interacts with LexA causing an autocatalytic cleavage which disrupts the DNA-binding part of LexA, leading to derepression of the SOS regulon and eventually DNA repair. The protein is LexA repressor of Bacillus pumilus (strain SAFR-032).